We begin with the raw amino-acid sequence, 143 residues long: Brain ribonuclease (143 aa).

The disordered stretch occupies residues 1 to 21 (KESAAAKFRRQHMDSGSSSSG). Residues lysine 7 and arginine 10 each coordinate substrate. The active-site Proton acceptor is the histidine 12. Intrachain disulfides connect cysteine 26–cysteine 84, cysteine 40–cysteine 95, cysteine 58–cysteine 110, and cysteine 65–cysteine 72. 41–45 (KPVNT) contributes to the substrate binding site. Residue asparagine 62 is glycosylated (N-linked (GlcNAc...) asparagine). Substrate is bound by residues lysine 66 and arginine 85. Residue histidine 119 is the Proton donor of the active site. Residue threonine 129 is glycosylated (O-linked (GalNAc...) threonine). Serine 133 carries O-linked (GalNAc...) serine glycosylation.

The protein belongs to the pancreatic ribonuclease family.

It is found in the secreted. The polypeptide is Brain ribonuclease (BRN) (Ovis aries (Sheep)).